Reading from the N-terminus, the 698-residue chain is Glycine--tRNA ligase beta subunit (698 aa).

The protein belongs to the class-II aminoacyl-tRNA synthetase family. In terms of assembly, tetramer of two alpha and two beta subunits.

Its subcellular location is the cytoplasm. It carries out the reaction tRNA(Gly) + glycine + ATP = glycyl-tRNA(Gly) + AMP + diphosphate. This is Glycine--tRNA ligase beta subunit from Xanthomonas campestris pv. campestris (strain B100).